Consider the following 392-residue polypeptide: Anhydro-N-acetylmuramic acid kinase (392 aa).

22-29 contributes to the ATP binding site; the sequence is GTSMDGVD.

It belongs to the anhydro-N-acetylmuramic acid kinase family.

It catalyses the reaction 1,6-anhydro-N-acetyl-beta-muramate + ATP + H2O = N-acetyl-D-muramate 6-phosphate + ADP + H(+). The protein operates within amino-sugar metabolism; 1,6-anhydro-N-acetylmuramate degradation. Its pathway is cell wall biogenesis; peptidoglycan recycling. In terms of biological role, catalyzes the specific phosphorylation of 1,6-anhydro-N-acetylmuramic acid (anhMurNAc) with the simultaneous cleavage of the 1,6-anhydro ring, generating MurNAc-6-P. Is required for the utilization of anhMurNAc either imported from the medium or derived from its own cell wall murein, and thus plays a role in cell wall recycling. The sequence is that of Anhydro-N-acetylmuramic acid kinase from Burkholderia mallei (strain NCTC 10229).